Here is an 895-residue protein sequence, read N- to C-terminus: MAFGRGRGNKRTSTSSYASTITMVIFVALCVFGVWMLSSNSVIPPQITQGSTRAAVAETERSDVSASSNGNDEPEPTKQESDEQQAFEDNPGKLPDDAVKSEDEQRKSAKEKSETTSSKTQTQETQQNNDDKISEEKEKDNGKENQTVQESEEGQMKKVVKEFEKEQKQQRDEDAGTQPKGTQGQEQGQGKEQPDVEQGNKQGQEQDSNTDVTFTDATKQEQPMETGQGETSETSKNEENGQPEEQNSGNEETGQQNEEKTTASEENGKGEKSMKDENGQQEEHTTAEEESGNKEEESTSKDENMEQQEERKDEKKHEQGSEASGFGSGIPKESAESQKSWKSQATESKDEKQRQTSESNTVERIMDGNAWVLCNATAGTDYIPCLDNEEAIMKLRSRRHFEHRERHCPEDPPTCLVPLPEGYKEAIKWPESRDKIWYHNVPHTKLAEVKGHQNWVKVTGEFLTFPGGGTQFIHGALHYIDFLQQSLKNIAWGKRTRVILDVGCGVASFGGFLFERDVIAMSLAPKDEHEAQVQFALERKIPAISAVMGSKRLPFPSRVFDLIHCARCRVPWHNEGGMLLLELNRMLRPGGYFVWSATPVYQKLEEDVQIWKEMSALTKSLCWELVTINKDKLNGIGAAIYQKPATNECYEKRKHNKPPLCKNNDDANAAWYVPLQACMHKVPTNVVERGSKWPVNWPRRLQTPPYWLNSSQMGIYGKPAPRDFTTDYEHWKHVVSKVYMNEIGISWSNVRNVMDMRAVYGGFAAALKDLQVWVMNVVNINSPDTLPIIYERGLFGIYHDWCESFSTYPRSYDLLHADHLFSKLRTRCNLVPVMAEVDRIVRPGGKLIVRDESNVIREVENMLKSLHWDVHLTFSKHQEGILSAQKGFWRPETSQ.

Topologically, residues 1 to 16 are cytoplasmic; that stretch reads MAFGRGRGNKRTSTSS. A helical; Signal-anchor for type II membrane protein membrane pass occupies residues 17–37; the sequence is YASTITMVIFVALCVFGVWML. The Lumenal segment spans residues 38–895; it reads SSNSVIPPQI…KGFWRPETSQ (858 aa). Positions 43–52 are enriched in polar residues; it reads IPPQITQGST. A disordered region spans residues 43 to 362; the sequence is IPPQITQGST…QRQTSESNTV (320 aa). Positions 90 to 114 are enriched in basic and acidic residues; it reads NPGKLPDDAVKSEDEQRKSAKEKSE. Low complexity predominate over residues 115–127; that stretch reads TTSSKTQTQETQQ. Basic and acidic residues predominate over residues 129–143; sequence NDDKISEEKEKDNGK. N-linked (GlcNAc...) asparagine glycosylation is present at Asn-145. Residues 154–174 are compositionally biased toward basic and acidic residues; it reads GQMKKVVKEFEKEQKQQRDED. Residues 176 to 191 are compositionally biased toward low complexity; that stretch reads GTQPKGTQGQEQGQGK. Composition is skewed to polar residues over residues 199-232 and 243-256; these read GNKQ…GETS and PEEQ…TGQQ. The segment covering 257–320 has biased composition (basic and acidic residues); it reads NEEKTTASEE…RKDEKKHEQG (64 aa). Polar residues predominate over residues 337–346; sequence SQKSWKSQAT. 2 N-linked (GlcNAc...) asparagine glycosylation sites follow: Asn-375 and Asn-709.

The protein belongs to the methyltransferase superfamily.

The protein resides in the endoplasmic reticulum membrane. This chain is Probable methyltransferase PMT27, found in Arabidopsis thaliana (Mouse-ear cress).